The chain runs to 80 residues: Transcription elongation factor 1 homolog (80 aa).

Zn(2+)-binding residues include cysteine 25, cysteine 28, cysteine 49, and cysteine 52.

Belongs to the ELOF1 family.

Its subcellular location is the nucleus. Functionally, transcription elongation factor implicated in the maintenance of proper chromatin structure in actively transcribed regions. The sequence is that of Transcription elongation factor 1 homolog from Encephalitozoon cuniculi (strain GB-M1) (Microsporidian parasite).